A 386-amino-acid polypeptide reads, in one-letter code: Outer membrane protein assembly factor BamB (386 aa).

The N-terminal stretch at 1 to 20 (MKKLFNQVLVAAGVLALLAG) is a signal peptide. Cysteine 21 carries N-palmitoyl cysteine lipidation. Residue cysteine 21 is the site of S-diacylglycerol cysteine attachment.

It belongs to the BamB family. In terms of assembly, part of the Bam complex.

The protein resides in the cell outer membrane. In terms of biological role, part of the outer membrane protein assembly complex, which is involved in assembly and insertion of beta-barrel proteins into the outer membrane. The protein is Outer membrane protein assembly factor BamB of Vibrio cholerae serotype O1 (strain ATCC 39315 / El Tor Inaba N16961).